The sequence spans 95 residues: Large ribosomal subunit protein eL37y (95 aa).

Residues cysteine 19, cysteine 22, cysteine 34, and cysteine 37 each contribute to the Zn(2+) site. The C4-type zinc finger occupies 19–37; sequence CVRCGRRSFHIQKSRCSAC.

The protein belongs to the eukaryotic ribosomal protein eL37 family. Requires Zn(2+) as cofactor.

In terms of biological role, binds to the 23S rRNA. The chain is Large ribosomal subunit protein eL37y (RPL37B) from Arabidopsis thaliana (Mouse-ear cress).